A 497-amino-acid chain; its full sequence is Phenylalanine--tRNA ligase alpha subunit (497 aa).

Residues threonine 329, 372–374 (QIE), and tyrosine 412 contribute to the L-phenylalanine site. Glutamate 414 is a Mg(2+) binding site. An L-phenylalanine-binding site is contributed by phenylalanine 438.

It belongs to the class-II aminoacyl-tRNA synthetase family. Phe-tRNA synthetase alpha subunit type 2 subfamily. Heterotetramer; dimer of two heterodimers formed by alpha and beta subunits. Mg(2+) is required as a cofactor.

Its subcellular location is the cytoplasm. It carries out the reaction tRNA(Phe) + L-phenylalanine + ATP = L-phenylalanyl-tRNA(Phe) + AMP + diphosphate + H(+). The chain is Phenylalanine--tRNA ligase alpha subunit (farsa) from Danio rerio (Zebrafish).